The primary structure comprises 230 residues: Nicotinamide riboside kinase 2 (230 aa).

9 to 17 (GMTNGGKTT) lines the ATP pocket. Positions 16 and 35 each coordinate Mg(2+). Catalysis depends on Asp-35, which acts as the Proton acceptor. Substrate is bound by residues 35 to 38 (DDFF) and 54 to 55 (WD). Arg-130 provides a ligand contact to ATP. Substrate contacts are provided by residues Arg-131 and 136–137 (YT). Residues 134 to 136 (RNY) and 174 to 176 (KSR) each bind ATP. The disordered stretch occupies residues 191-230 (LLNRSQESAPSPARPARTQGPGRGCGHRTARPAASQQDSM).

The protein belongs to the uridine kinase family. NRK subfamily. In terms of assembly, monomer. Interacts with ITGB1 alone or when associated with alpha-7, but not with alpha-5. As to expression, predominantly expressed in skeletal muscle and, at a much lower level, in the heart (at protein level). No expression in brain, kidney, liver, lung, pancreas nor placenta.

It catalyses the reaction beta-nicotinamide D-riboside + ATP = beta-nicotinamide D-ribonucleotide + ADP + H(+). It carries out the reaction beta-D-ribosylnicotinate + ATP = nicotinate beta-D-ribonucleotide + ADP + H(+). It functions in the pathway cofactor biosynthesis; NAD(+) biosynthesis. Catalyzes the phosphorylation of nicotinamide riboside (NR) and nicotinic acid riboside (NaR) to form nicotinamide mononucleotide (NMN) and nicotinic acid mononucleotide (NaMN). Reduces laminin matrix deposition and cell adhesion to laminin, but not to fibronectin. Involved in the regulation of PXN at the protein level and of PXN tyrosine phosphorylation. May play a role in the regulation of terminal myogenesis. The polypeptide is Nicotinamide riboside kinase 2 (NMRK2) (Homo sapiens (Human)).